Here is a 101-residue protein sequence, read N- to C-terminus: Small ribosomal subunit protein bS18c (101 aa).

Belongs to the bacterial ribosomal protein bS18 family. Part of the 30S ribosomal subunit.

It localises to the plastid. The protein localises to the chloroplast. The protein is Small ribosomal subunit protein bS18c of Solanum bulbocastanum (Wild potato).